A 436-amino-acid chain; its full sequence is Adenine nucleotide transporter BT1, chloroplastic/amyloplastic/mitochondrial (436 aa).

The interval 83–135 (ASLAPPFPGSRPPGRRGRGSEEEEAEGRRHEEAAAAGRSEPEEGQGQDRQPAP) is disordered. Solcar repeat units follow at residues 132 to 216 (QPAP…AKKF), 227 to 311 (IPIP…LKRL), and 324 to 412 (VGPV…CKKI). 6 helical membrane-spanning segments follow: residues 137–158 (RLVS…LETI), 193–213 (AVNV…YDTA), 229–247 (IPTP…TLCT), 290–310 (SLIG…TLKR), 327–347 (VATL…TFPL), and 384–405 (LYRG…AFMC). The segment covering 417–428 (EDEEEEDEAGGG) has biased composition (acidic residues). A disordered region spans residues 417-436 (EDEEEEDEAGGGEDDKKKVE).

This sequence belongs to the mitochondrial carrier (TC 2.A.29) family. Highly expressed in silks and endosperm of developing kernels. Expressed at intermediate levels in tassels and lower levels in stems and leaves.

It is found in the plastid. Its subcellular location is the chloroplast inner membrane. It localises to the amyloplast inner membrane. The protein localises to the mitochondrion inner membrane. With respect to regulation, inhibited by mersalyl. In terms of biological role, probable adenylate translocator that mediates transport of ADP-glucose into endosperm storage plastids during starch synthesis. Transports cytosolic ADP-glucose to amyloplast stroma by counter-exchange with ADP. The chain is Adenine nucleotide transporter BT1, chloroplastic/amyloplastic/mitochondrial (BT1) from Zea mays (Maize).